Here is a 109-residue protein sequence, read N- to C-terminus: Putative small proline-rich protein 2J (109 aa).

5 tandem repeats follow at residues 21–29, 30–38, 39–47, 48–56, and 57–65. The segment at 21-65 is 5 X 9 AA approximate tandem repeats; that stretch reads RSAQSPVLCQSAPSLVLLQSAQSPIHCQSALSHAHLSHASRNALL. A disordered region spans residues 76-109; that stretch reads AHPRANKGFSSLQNQKKRTESILHKSIATPPSSI.

Belongs to the cornifin (SPRR) family. Not expressed in uterus.

The protein localises to the cytoplasm. Functionally, cross-linked envelope protein of keratinocytes. It is a keratinocyte protein that first appears in the cell cytosol, but ultimately becomes cross-linked to membrane proteins by transglutaminase. All that results in the formation of an insoluble envelope beneath the plasma membrane. The chain is Putative small proline-rich protein 2J (Sprr2j) from Mus musculus (Mouse).